We begin with the raw amino-acid sequence, 235 residues long: Adenosine 5'-phosphosulfate reductase (235 aa).

[4Fe-4S] cluster contacts are provided by cysteine 121, cysteine 122, cysteine 204, and cysteine 207. Cysteine 230 functions as the Nucleophile; cysteine thiosulfonate intermediate in the catalytic mechanism.

It belongs to the PAPS reductase family. CysH subfamily. Requires [4Fe-4S] cluster as cofactor.

It localises to the cytoplasm. The catalysed reaction is [thioredoxin]-disulfide + sulfite + AMP + 2 H(+) = adenosine 5'-phosphosulfate + [thioredoxin]-dithiol. The protein operates within sulfur metabolism; hydrogen sulfide biosynthesis; sulfite from sulfate. Catalyzes the formation of sulfite from adenosine 5'-phosphosulfate (APS) using thioredoxin as an electron donor. The protein is Adenosine 5'-phosphosulfate reductase of Anoxybacillus flavithermus (strain DSM 21510 / WK1).